The chain runs to 558 residues: Armadillo repeat-containing X-linked protein 5 (558 aa).

2 stretches are compositionally biased toward basic and acidic residues: residues 1–14 and 139–156; these read MVDSGTEARARGKA and KSHDKANTGSRPDRREET. Disordered stretches follow at residues 1 to 35 and 139 to 165; these read MVDSGTEARARGKAEAGLQDGISGPATARVNGKTQ and KSHDKANTGSRPDRREETSIGMKSSDE. The stretch at 300 to 339 is one ARM 1 repeat; sequence CKSRGFSLEPKEFDKLVALLKLTKDPFIHEIATMIMGISP. The tract at residues 369 to 388 is disordered; sequence HPGALSMVDDSSESSEEPKS. 3 ARM repeats span residues 422-461, 463-503, and 520-558; these read IKFEDHYVITSYIPDFLTLLNKGSVKTKFYVLKVFSCLSK, HANT…NINF, and SELISIFQEAKQFGQKLQDLAEHSDPEVRDKVIRLILKL.

Belongs to the eutherian X-chromosome-specific Armcx family.

The protein is Armadillo repeat-containing X-linked protein 5 (ARMCX5) of Homo sapiens (Human).